We begin with the raw amino-acid sequence, 1240 residues long: DNA-directed RNA polymerase subunit beta (1240 aa).

Belongs to the RNA polymerase beta chain family. The RNAP catalytic core consists of 2 alpha, 1 beta, 1 beta' and 1 omega subunit. When a sigma factor is associated with the core the holoenzyme is formed, which can initiate transcription.

The enzyme catalyses RNA(n) + a ribonucleoside 5'-triphosphate = RNA(n+1) + diphosphate. Functionally, DNA-dependent RNA polymerase catalyzes the transcription of DNA into RNA using the four ribonucleoside triphosphates as substrates. The sequence is that of DNA-directed RNA polymerase subunit beta from Rhodopirellula baltica (strain DSM 10527 / NCIMB 13988 / SH1).